A 1363-amino-acid chain; its full sequence is ABC multidrug transporter MDR2 (1363 aa).

A helical membrane pass occupies residues 65–85 (IALIVIGTIAGIGAGIPFPLL). An ABC transmembrane type-1 1 domain is found at 69-367 (VIGTIAGIGA…MAPFMHIFAS (299 aa)). The N-linked (GlcNAc...) asparagine glycan is linked to N97. 5 helical membrane passes run 119–139 (VLQV…HTGC), 193–213 (KVGL…VAFL), 215–235 (VATI…MAFG), 301–321 (IQFG…FWQG), and 336–356 (VSVG…FVLS). The 280-residue stretch at 403-682 (IELQDVTFNY…DGVYAGMVRL (280 aa)) folds into the ABC transporter 1 domain. 438 to 445 (GTSGSGKS) contacts ATP. Residues N552 and N633 are each glycosylated (N-linked (GlcNAc...) asparagine). A disordered region spans residues 738 to 758 (YMPEEADSLPTEPENEKEKPK). 3 helical membrane passes run 781-801 (LGLI…VIFG), 820-840 (GMLF…AVIV), and 896-916 (LTGT…AGVI). Positions 781 to 1052 (LGLITSIMIG…MFALVPDISK (272 aa)) constitute an ABC transmembrane type-1 2 domain. The N-linked (GlcNAc...) asparagine glycan is linked to N973. 2 helical membrane passes run 992-1012 (FWLS…YWWG) and 1016-1036 (ILAG…LLFS). An ABC transporter 2 domain is found at 1119-1358 (VQFRNVHFRY…CESYRANVIH (240 aa)). Residue 1154-1161 (GPSGSGKS) participates in ATP binding.

Belongs to the ABC transporter superfamily. ABCB family. Multidrug resistance exporter (TC 3.A.1.201) subfamily.

The protein localises to the cell membrane. Functionally, pleiotropic ABC efflux transporter that may be involved in the modulation susceptibility to a wide range of unrelated cytotoxic compounds. The protein is ABC multidrug transporter MDR2 of Trichophyton tonsurans (strain CBS 112818) (Scalp ringworm fungus).